The sequence spans 465 residues: Cysteine--tRNA ligase (465 aa).

Cys-30 is a Zn(2+) binding site. A 'HIGH' region motif is present at residues 32–42 (ITVYDYCHVGH). Cys-214, His-239, and Glu-243 together coordinate Zn(2+). A 'KMSKS' region motif is present at residues 271–275 (KMSKS). Lys-274 provides a ligand contact to ATP.

This sequence belongs to the class-I aminoacyl-tRNA synthetase family. In terms of assembly, monomer. Requires Zn(2+) as cofactor.

Its subcellular location is the cytoplasm. It carries out the reaction tRNA(Cys) + L-cysteine + ATP = L-cysteinyl-tRNA(Cys) + AMP + diphosphate. In Burkholderia cenocepacia (strain HI2424), this protein is Cysteine--tRNA ligase.